A 385-amino-acid chain; its full sequence is SWI/SNF-related matrix-associated actin-dependent regulator of chromatin subfamily B member 1 (385 aa).

The segment at 1-113 (MMMMALSKTF…DEKYKAVSIS (113 aa)) is DNA-binding. Residues Lys106, Lys108, and Lys124 each participate in a glycyl lysine isopeptide (Lys-Gly) (interchain with G-Cter in SUMO2) cross-link. Phosphoserine is present on Ser129. Residue Lys161 forms a Glycyl lysine isopeptide (Lys-Gly) (interchain with G-Cter in SUMO2) linkage. The interval 183–243 (PEVLVPIRLD…VPAIASAIRQ (61 aa)) is HIV-1 integrase-binding. A run of 2 repeats spans residues 186–245 (LVPI…RQQI) and 259–319 (DQRV…RGQL). Positions 186–245 (LVPIRLDMEIDGQKLRDAFTWNMNEKLMTPEMFSEILCDDLDLNPLTFVPAIASAIRQQI) are MYC-binding. The 2 X approximate tandem repeats stretch occupies residues 186–319 (LVPIRLDMEI…TIAYSIRGQL (134 aa)). The interval 304–318 (GGEFVTTIAYSIRGQ) is interaction with PPP1R15A.

It belongs to the SNF5 family. Component of the multiprotein chromatin-remodeling complexes SWI/SNF: SWI/SNF-A (BAF), SWI/SNF-B (PBAF) and related complexes. The canonical complex contains a catalytic subunit (either SMARCA4/BRG1/BAF190A or SMARCA2/BRM/BAF190B) and at least SMARCE1, ACTL6A/BAF53, SMARCC1/BAF155, SMARCC2/BAF170, and SMARCB1/SNF5/BAF47. Other subunits specific to each of the complexes may also be present permitting several possible combinations developmentally and tissue specific. Component of the BAF complex, which includes at least actin (ACTB), ARID1A/BAF250A, ARID1B/BAF250B, SMARCA2/BRM, SMARCA4/BRG1/BAF190A, ACTL6A/BAF53, ACTL6B/BAF53B, SMARCE1/BAF57 SMARCC1/BAF155, SMARCC2/BAF170, SMARCB1/SNF5/INI1, and one or more SMARCD1/BAF60A, SMARCD2/BAF60B, or SMARCD3/BAF60C. In muscle cells, the BAF complex also contains DPF3. Component of neural progenitors-specific chromatin remodeling complex (npBAF complex) composed of at least, ARID1A/BAF250A or ARID1B/BAF250B, SMARCD1/BAF60A, SMARCD3/BAF60C, SMARCA2/BRM/BAF190B, SMARCA4/BRG1/BAF190A, SMARCB1/BAF47, SMARCC1/BAF155, SMARCE1/BAF57, SMARCC2/BAF170, PHF10/BAF45A, ACTL6A/BAF53A and actin. Component of neuron-specific chromatin remodeling complex (nBAF complex) composed of at least, ARID1A/BAF250A or ARID1B/BAF250B, SMARCD1/BAF60A, SMARCD3/BAF60C, SMARCA2/BRM/BAF190B, SMARCA4/BRG1/BAF190A, SMARCB1/BAF47, SMARCC1/BAF155, SMARCE1/BAF57, SMARCC2/BAF170, DPF1/BAF45B, DPF3/BAF45C, ACTL6B/BAF53B and actin. Component of the SWI/SNF-B (PBAF) chromatin remodeling complex, at least composed of SMARCA4/BRG1, SMARCB1/BAF47/SNF5, ACTL6A/BAF53A or ACTL6B/BAF53B, SMARCE1/BAF57, SMARCD1/BAF60A, SMARCD2/BAF60B, perhaps SMARCD3/BAF60C, SMARCC1/BAF155, SMARCC2/BAF170, PBRM1/BAF180, ARID2/BAF200 and actin. Binds to double-stranded DNA. Interacts with CEBPB (when not methylated). Interacts with PIH1D1. Interacts with MYK and MAEL. Interacts with PPP1R15A. Interacts with DPF2. Interacts with YWHAZ. Interacts with ERCC6. Interacts with FOS, FOSB isoform 1 and 2, FOSL1 and FOSL2. As to quaternary structure, (Microbial infection) Binds tightly to the human immunodeficiency virus-type 1 (HIV-1) integrase in vitro and stimulates its DNA-joining activity. Interacts with human papillomavirus 18 E1 protein to stimulate its viral replication. Interacts with Epstein-Barr virus protein EBNA-2.

The protein localises to the nucleus. In terms of biological role, core component of the BAF (hSWI/SNF) complex. This ATP-dependent chromatin-remodeling complex plays important roles in cell proliferation and differentiation, in cellular antiviral activities and inhibition of tumor formation. The BAF complex is able to create a stable, altered form of chromatin that constrains fewer negative supercoils than normal. This change in supercoiling would be due to the conversion of up to one-half of the nucleosomes on polynucleosomal arrays into asymmetric structures, termed altosomes, each composed of 2 histones octamers. Stimulates in vitro the remodeling activity of SMARCA4/BRG1/BAF190A. Involved in activation of CSF1 promoter. Belongs to the neural progenitors-specific chromatin remodeling complex (npBAF complex) and the neuron-specific chromatin remodeling complex (nBAF complex). During neural development a switch from a stem/progenitor to a postmitotic chromatin remodeling mechanism occurs as neurons exit the cell cycle and become committed to their adult state. The transition from proliferating neural stem/progenitor cells to postmitotic neurons requires a switch in subunit composition of the npBAF and nBAF complexes. As neural progenitors exit mitosis and differentiate into neurons, npBAF complexes which contain ACTL6A/BAF53A and PHF10/BAF45A, are exchanged for homologous alternative ACTL6B/BAF53B and DPF1/BAF45B or DPF3/BAF45C subunits in neuron-specific complexes (nBAF). The npBAF complex is essential for the self-renewal/proliferative capacity of the multipotent neural stem cells. The nBAF complex along with CREST plays a role regulating the activity of genes essential for dendrite growth. Plays a key role in cell-cycle control and causes cell cycle arrest in G0/G1. This chain is SWI/SNF-related matrix-associated actin-dependent regulator of chromatin subfamily B member 1 (SMARCB1), found in Homo sapiens (Human).